The primary structure comprises 1366 residues: Collagen alpha-2(I) chain (1366 aa).

An N-terminal signal peptide occupies residues 1-22 (MLSFVDTRTLLLLAVTSCLATC). Residue Gln23 is modified to Pyrrolidone carboxylic acid. Residues 23–79 (QSLQEATARKGPTGDRGPRGERGPPGPPGRDGDDGIPGPPGPPGPPGPPGLGGNFAA) constitute a propeptide, N-terminal propeptide. The tract at residues 27-1131 (EATARKGPTG…PRSPPSLRPK (1105 aa)) is disordered. Basic and acidic residues predominate over residues 34–44 (PTGDRGPRGER). A compositionally biased stretch (pro residues) spans 59–71 (PGPPGPPGPPGPP). The residue at position 84 (Lys84) is an Allysine. Over residues 84–94 (KGVGLGPGPMG) the composition is skewed to gly residues. Low complexity predominate over residues 95–132 (LMGPRGPPGASGAPGPQGFQGPAGEPGEPGQTGPAGAR). The segment covering 141–155 (AGEDGHPGKPGRPGE) has biased composition (basic and acidic residues). Lys177 is subject to 5-hydroxylysine; alternate. Residue Lys177 is glycosylated (O-linked (Gal...) hydroxylysine; alternate). 8 stretches are compositionally biased toward low complexity: residues 225–254 (VGAPGPAGARGSDGSVGPVGPAGPIGSAGP), 279–293 (AGPRGEVGLPGVSGP), 300–321 (PGANGLTGAKGAAGLPGVAGAP), 330–345 (PGPVGAAGATGARGIV), 384–408 (NGEAGSAGPSGPPGLRGSPGSRGLP), 423–434 (RGATGPAGVRGP), 470–489 (LPGIDGRPGPIGPAGARGEP), and 513–531 (AGLAGARGAPGPDGNNGAQ). Residues 538-547 (GVQGGKGEQG) are compositionally biased toward gly residues. Over residues 594-611 (PGESGAAGPSGPIGSRGP) the composition is skewed to low complexity. A compositionally biased stretch (gly residues) spans 634-643 (GASGPGGLPG). Composition is skewed to low complexity over residues 668 to 690 (NPGRDGARGAPGAMGAPGPAGAT) and 717 to 737 (VGPAGPNGFAGPAGAAGQPGA). The segment covering 738 to 747 (KGERGTKGPK) has biased composition (basic and acidic residues). The segment covering 756 to 765 (TGPIGSAGPS) has biased composition (low complexity). Gly residues predominate over residues 775–784 (GSRGDGGPPG). Low complexity-rich tracts occupy residues 785 to 795 (ATGFPGAAGRT), 863 to 876 (PQGLLGAPGILGLP), 893 to 932 (EPGPLGIAGPPGARGPPGAVGAPGVNGAPGEAGRDGNPGN), 951 to 974 (PGNIGPVGAVGAPGPHGPVGPTGK), and 981 to 1001 (PGPAGSVGPVGAVGPRGPSGP). The span at 1005–1016 (RGDKGEPGEKGP) shows a compositional bias: basic and acidic residues. The span at 1089 to 1103 (AGPPGPPGPPGPPGP) shows a compositional bias: pro residues. Residues 1120–1366 (DQPRSPPSLR…RVDVGPVCFK (247 aa)) constitute a propeptide, C-terminal propeptide. The 234-residue stretch at 1133–1366 (YEVDATLKSL…RVDVGPVCFK (234 aa)) folds into the Fibrillar collagen NC1 domain. 3 cysteine pairs are disulfide-bonded: Cys1163-Cys1195, Cys1203-Cys1364, and Cys1272-Cys1317. Ca(2+)-binding residues include Asp1181, Asn1183, Gln1184, Cys1186, and Asp1189.

It belongs to the fibrillar collagen family. In terms of assembly, trimers of one alpha 2(I) and two alpha 1(I) chains. Interacts (via C-terminus) with TMEM131 (via PapD-L domain); the interaction is direct and is involved in assembly and TRAPPIII ER-to-Golgi transport complex-dependent secretion of collagen. Post-translationally, prolines at the third position of the tripeptide repeating unit (G-X-Y) are hydroxylated in some or all of the chains. In terms of tissue distribution, forms the fibrils of tendon, ligaments and bones. In bones the fibrils are mineralized with calcium hydroxyapatite.

Its subcellular location is the secreted. It localises to the extracellular space. The protein localises to the extracellular matrix. Type I collagen is a member of group I collagen (fibrillar forming collagen). This is Collagen alpha-2(I) chain (COL1A2) from Canis lupus familiaris (Dog).